The chain runs to 211 residues: Cytochrome c biogenesis ATP-binding export protein CcmA (211 aa).

Residues 1–211 form the ABC transporter domain; that stretch reads MAIHNLACVR…RMAEATSCFG (211 aa). 33-40 lines the ATP pocket; it reads GSNGAGKT.

Belongs to the ABC transporter superfamily. CcmA exporter (TC 3.A.1.107) family. The complex is composed of two ATP-binding proteins (CcmA) and two transmembrane proteins (CcmB).

It localises to the cell inner membrane. The catalysed reaction is heme b(in) + ATP + H2O = heme b(out) + ADP + phosphate + H(+). Part of the ABC transporter complex CcmAB involved in the biogenesis of c-type cytochromes; once thought to export heme, this seems not to be the case, but its exact role is uncertain. Responsible for energy coupling to the transport system. The protein is Cytochrome c biogenesis ATP-binding export protein CcmA of Sodalis glossinidius (strain morsitans).